A 75-amino-acid polypeptide reads, in one-letter code: Venom serine protease inhibitor BiVSPI (75 aa).

The N-terminal stretch at 1–20 is a signal peptide; the sequence is MSRILFVFLAVMAIFSTSFG. 5 cysteine pairs are disulfide-bonded: Cys-23–Cys-55, Cys-32–Cys-51, Cys-35–Cys-47, Cys-39–Cys-75, and Cys-57–Cys-69. The 53-residue stretch at 23–75 folds into the TIL domain; the sequence is CGLNEEFKSCGSCEPTCAKPRVTICTMECKIGCQCKSGYLRNGEGTCVLPEKC.

The protein belongs to the serine protease inhibitor-like (TIL domain-containing) family. Post-translationally, may be O-glycosylated. In terms of tissue distribution, expressed by the venom gland (at protein level) and expressed in fat body.

The protein localises to the secreted. Its subcellular location is the target cell membrane. Functionally, antimicrobial venom serine protease inhibitor. Exhibits inhibitory activity against chymotrypsin (IC(50)=19.56 nM, Ki=15.24 nM) and microbial serine proteases, such as subtilisin A (IC(50)=6.57 nM, Ki=6.83 nM) and proteinase K (IC(50)=7.11 nM, Ki=7.02 nM). Has not activity against trypsin, plasmin, tPA, thrombin, factor Xa or elastase. Binds and inhibits Gram-positive bacteria (B.subtilis (MIC=29.45 uM), B.thuringiensis (MIC=91.03 uM)) and the entomopathogenic fungus B.bassiana (MIC=30.09 uM) but not to E.coli. This Bombus ignitus (Bumblebee) protein is Venom serine protease inhibitor BiVSPI.